The sequence spans 642 residues: MSEKVGAMGGNKGGAFDDGVFDGVKKVIVGKDFNNVTYIKVEYEKDGKFEIREHGTNRGQLKEFSVDYPNEYITAVGGSYDTVFGYGSALIKSLLFKTSYGRTSPILGHTTLLGNPAGKEFMLESKYGGKLLGFHGRSGEALDAIGPHFFAVNSSLKHFKPQGGNGGSAWDDGAFDGVRKVLVGRNGKFVSYVRFEYAKGERMVPHAHGKRQEAPQEFVVDYPNEHITSVEGTIDGYLSSLKFTTSKGRTSPVFGNVVGSKFVFEETSFKLVGFCGRSGEAIDALGAHFAPLPAPTPAPAPAPAPAPAPAPSPAPASAPVPAPAPTPAPAPAPPNKVEALGGNGGTIFDDGAFDHVRKVYIGQGDSGVAYVKFEYRKDGKRETREHGKMTVLGTEEFEVESDDYITSIEVSVDNVFGFKSEIVTSLVFKTFKGITSQPFGMETEKKLELKDGKGGKLVGFHGKASDVLYALGAYFAPTTNSTTPSTPSTSKKLQARGGNGGASWDDGVFDGVRKILVGQGNDGVAFVTFEYNKGSQAILGDRHGKQTLLGTETFELDYPSEYITSVEGYYDKIFGVEAEVVTSLTFKTNKRTSQPFGMTAGEHFELNEDGYKIVGFHGKAGDLVHQIGVHAVPIFTNYRCVF.

4 Jacalin-type lectin domains span residues 2-151 (SEKV…HFFA), 156-291 (LKHF…HFAP), 334-477 (PNKV…YFAP), and 490-633 (SKKL…HAVP). Residues 296 to 334 (TPAPAPAPAPAPAPAPSPAPASAPVPAPAPTPAPAPAPP) are compositionally biased toward pro residues. Disordered stretches follow at residues 296-338 (TPAP…NKVE) and 479-499 (TNSTTPSTPSTSKKLQARGGN). The span at 479-490 (TNSTTPSTPSTS) shows a compositional bias: low complexity.

It belongs to the jacalin lectin family. In terms of tissue distribution, expressed in flowers. Detected mainly in ovules and styles of immature flowers, but also in pistils, styles, stamens, petals and embryos. Not detected in leaves.

The chain is Myrosinase-binding protein 2 (F-ATMBP) from Arabidopsis thaliana (Mouse-ear cress).